Reading from the N-terminus, the 1284-residue chain is Putative late blight resistance protein homolog R1B-16 (1284 aa).

Residues 533–555 (PRMNEEIVGFKDVIENLRNQLLN) are a coiled coil. In terms of domain architecture, NB-ARC spans 534–821 (RMNEEIVGFK…SESFIKSSEG (288 aa)). 567–574 (GMPGLGKT) provides a ligand contact to ATP. 8 LRR repeats span residues 942-966 (FKFLKVLDLEHQVVIDSIPTELFYL), 985-1010 (LWNLETLILKHVSRCTVLLPSTVWDM), 1013-1036 (LRHLHIPNFRPENEEALLENSAKL), 1085-1107 (PIRLEILKLYRSKAFNTIPFCIS), 1108-1135 (APNLKYLKLSRSYMDSQYLSETADHLKN), 1159-1181 (FPQLKILKLEYLALMKWIVADDA), 1182-1206 (FPNLEQLVLHECRHLMEIPSCFMDI), and 1219-1243 (ESVVKSAMNIQETQVEDYQNTNFKL). Positions 1217 to 1284 (CNESVVKSAM…VEKQRKRGML (68 aa)) constitute an HMA domain.

Belongs to the disease resistance NB-LRR family.

It localises to the cytoplasm. Its subcellular location is the membrane. Confers resistance to late blight (Phytophthora infestans) races carrying the avirulence gene Avr1. Resistance proteins guard the plant against pathogens that contain an appropriate avirulence protein via an indirect interaction with this avirulence protein. That triggers a defense system including the hypersensitive response, which restricts the pathogen growth. The sequence is that of Putative late blight resistance protein homolog R1B-16 (R1B-16) from Solanum demissum (Wild potato).